A 351-amino-acid polypeptide reads, in one-letter code: F-box protein At1g47810 (351 aa).

The F-box domain occupies 8–54; sequence LQSLDPIPVDVLFEIFLNLPAKFLARFVCVSKLWAKIIRNQDFIRSF.

The polypeptide is F-box protein At1g47810 (Arabidopsis thaliana (Mouse-ear cress)).